The sequence spans 462 residues: Golgi-associated PDZ and coiled-coil motif-containing protein (462 aa).

The stretch at 83-194 (KAQSVSQINH…EDEALRGHIA (112 aa)) forms a coiled coil. The PDZ domain maps to 288-371 (KVLLLKEDHE…EIEFEVVYVA (84 aa)). The disordered stretch occupies residues 427–449 (TDTHENGDLGTASETPLDDGASK).

Homooligomer. Interacts with FZD5. Interacts with FZD8. Interacts with GRID2 and BECN1. Interacts with CSPG5. Interacts with CLCN3. Interacts with STX6. Interacts with CFTR. Interacts with ASIC3. Interacts with GOLGA3. Interacts with NLGN1. Interacts with RHOQ. Interacts with MARCHF2; the interaction leads to CFTR ubiquitination and degradation. May interact with CACNG2. Interacts with CCDC62.

Its subcellular location is the cytoplasm. The protein resides in the golgi apparatus membrane. It localises to the golgi apparatus. The protein localises to the trans-Golgi network membrane. It is found in the synapse. Its subcellular location is the postsynaptic density. The protein resides in the cell projection. It localises to the dendrite. Plays a role in intracellular protein trafficking and degradation. May regulate CFTR chloride currents and acid-induced ASIC3 currents by modulating cell surface expression of both channels. May also regulate the intracellular trafficking of the ADR1B receptor. May play a role in autophagy. Together with MARCHF2 mediates the ubiquitination and lysosomal degradation of CFTR. Overexpression results in CFTR intracellular retention and degradation in the lysosomes. The protein is Golgi-associated PDZ and coiled-coil motif-containing protein (GOPC) of Pongo abelii (Sumatran orangutan).